An 85-amino-acid chain; its full sequence is Splicing factor 3B subunit 5 (85 aa).

The protein belongs to the SF3B5 family. Component of the SF3B complex. SF3B complex associates with the splicing factor SF3A complex and a 12S RNA unit to form the U2 small nuclear ribonucleoproteins complex (U2 snRNP). Identified in the SAGA transcription regulatory histone acetylation (HAT) complex; the interaction is RNA-independent.

The protein resides in the nucleus. Functionally, involved in pre-mRNA splicing as component of spliceosome. As part of the spliceosome complex, plays a role in the regulation of spermatogonial differentiation. When associated with the SAGA transcription regulatory histone acetylation (HAT) complex, might be involved in the transcriptional activation of a subset of SAGA-regulated genes. This is Splicing factor 3B subunit 5 from Drosophila melanogaster (Fruit fly).